Here is a 154-residue protein sequence, read N- to C-terminus: 17.0 kDa class II heat shock protein (154 aa).

The sHSP domain occupies Asp-39–Ala-154.

The protein belongs to the small heat shock protein (HSP20) family.

Its subcellular location is the cytoplasm. In Zea mays (Maize), this protein is 17.0 kDa class II heat shock protein (HSP18).